The sequence spans 158 residues: Transcription elongation factor GreA (158 aa).

The protein belongs to the GreA/GreB family.

Necessary for efficient RNA polymerase transcription elongation past template-encoded arresting sites. The arresting sites in DNA have the property of trapping a certain fraction of elongating RNA polymerases that pass through, resulting in locked ternary complexes. Cleavage of the nascent transcript by cleavage factors such as GreA or GreB allows the resumption of elongation from the new 3'terminus. GreA releases sequences of 2 to 3 nucleotides. In Sinorhizobium medicae (strain WSM419) (Ensifer medicae), this protein is Transcription elongation factor GreA.